The primary structure comprises 133 residues: Succinate dehydrogenase assembly factor 3, mitochondrial (133 aa).

The transit peptide at 1–12 (MNNKLIYRSVRF) directs the protein to the mitochondrion.

Belongs to the complex I LYR family. SDHAF3 subfamily. Interacts with SDH2 within an SDH1-SDH2 subcomplex.

Its subcellular location is the mitochondrion. The protein localises to the mitochondrion intermembrane space. The protein resides in the mitochondrion matrix. Plays an essential role in the assembly of succinate dehydrogenase (SDH), an enzyme complex (also referred to as respiratory complex II) that is a component of both the tricarboxylic acid (TCA) cycle and the mitochondrial electron transport chain, and which couples the oxidation of succinate to fumarate with the reduction of ubiquinone (coenzyme Q) to ubiquinol. Promotes maturation of the iron-sulfur protein subunit SDH2 of the SDH catalytic dimer, protecting it from the deleterious effects of oxidants. Acts together with SDHAF1 (SDH6). In Saccharomyces cerevisiae (strain ATCC 204508 / S288c) (Baker's yeast), this protein is Succinate dehydrogenase assembly factor 3, mitochondrial.